Consider the following 512-residue polypeptide: Glycerol kinase (512 aa).

Residue threonine 14 participates in ADP binding. ATP contacts are provided by threonine 14, threonine 15, and serine 16. Threonine 14 provides a ligand contact to sn-glycerol 3-phosphate. Arginine 18 provides a ligand contact to ADP. Residues arginine 83, glutamate 84, tyrosine 135, and aspartate 244 each coordinate sn-glycerol 3-phosphate. The glycerol site is built by arginine 83, glutamate 84, tyrosine 135, aspartate 244, and glutamine 245. 4 residues coordinate ADP: threonine 266, glycine 309, glycine 410, and asparagine 414. The ATP site is built by threonine 266, glycine 309, and glycine 410.

The protein belongs to the FGGY kinase family.

It carries out the reaction glycerol + ATP = sn-glycerol 3-phosphate + ADP + H(+). Its pathway is polyol metabolism; glycerol degradation via glycerol kinase pathway; sn-glycerol 3-phosphate from glycerol: step 1/1. Its activity is regulated as follows. Inhibited by fructose 1,6-bisphosphate (FBP). Functionally, key enzyme in the regulation of glycerol uptake and metabolism. Catalyzes the phosphorylation of glycerol to yield sn-glycerol 3-phosphate. The polypeptide is Glycerol kinase (Gluconobacter oxydans (strain 621H) (Gluconobacter suboxydans)).